An 827-amino-acid polypeptide reads, in one-letter code: SID1 transmembrane family member 1 (827 aa).

An N-terminal signal peptide occupies residues 1–19 (MLDCLRLALLCALPWLLRA). Residues 20–309 (AVPGHQEEPL…SIKESVYVKS (290 aa)) lie on the Extracellular side of the membrane. Asn-67, Asn-83, Asn-136, and Asn-282 each carry an N-linked (GlcNAc...) asparagine glycan. A helical transmembrane segment spans residues 310–330 (SLFSIFVFLSFYLGCLLVVLV). At 331-442 (HHVRFQRKSI…DRRIVSKKYK (112 aa)) the chain is on the cytoplasmic side. Residues 344–409 (FGSSDGSGNM…VEESDFDTMP (66 aa)) are disordered. A compositionally biased stretch (low complexity) spans 375–386 (SSSSPGRQMSSS). The segment covering 398–409 (SSVEESDFDTMP) has biased composition (acidic residues). The helical transmembrane segment at 443 to 463 (IYFWNIITIAVFYALPVMQLV) threads the bilayer. Residues 464–494 (ITYQTVVNVTGNQDICYYNFLCAHPLGVLSA) lie on the Extracellular side of the membrane. Asn-471 carries an N-linked (GlcNAc...) asparagine glycan. Residues 495–515 (FNNILSNLGHVLLGFLFLLIV) traverse the membrane as a helical segment. Residues 516-541 (LRRDLLHRRALEAKDIFAMEYGIPKH) are Cytoplasmic-facing. A helical membrane pass occupies residues 542 to 562 (FGLFYAMGIALMMEGVLSACY). The Extracellular portion of the chain corresponds to 563-572 (HVCPNYSNFQ). An N-linked (GlcNAc...) asparagine glycan is attached at Asn-567. The helical transmembrane segment at 573–590 (FDTSFMYMIAGLCMLKLY) threads the bilayer. Topologically, residues 591–600 (QTRHPDINAS) are cytoplasmic. Residues 601–621 (AYSAYASFAVVITLTVLGVVF) form a helical membrane-spanning segment. Over 622-626 (GKNDV) the chain is Extracellular. A helical transmembrane segment spans residues 627–647 (WFWIIFSAIHILSSLALSTQI). Residues 648 to 683 (YYMGRFKIDLGIFRRAAMVFYTDCIQQCSRPLYMDR) lie on the Cytoplasmic side of the membrane. Residues 684 to 704 (MVLLIVGNLVNWSFAFFGLIY) traverse the membrane as a helical segment. Residues 705–710 (RPRDFA) are Extracellular-facing. Residues 711 to 731 (SYMLGIFICNLLLYLAFYIIM) form a helical membrane-spanning segment. Topologically, residues 732–741 (KLRSSEKVLP) are cytoplasmic. The helical transmembrane segment at 742-762 (LPVFCIAATAVVWAAALYFFF) threads the bilayer. The Extracellular portion of the chain corresponds to 763-791 (QNLSSWEGTPAESREKNRECVLLDFFDDH). An N-linked (GlcNAc...) asparagine glycan is attached at Asn-764. A helical transmembrane segment spans residues 792–812 (DIWHFLSATALFFSFLVLLTL). At 813–827 (DDDLDVVRRDQIPVF) the chain is on the cytoplasmic side.

It belongs to the SID1 family.

It is found in the membrane. Its function is as follows. In vitro binds long double-stranded RNA (dsRNA) (500 and 700 base pairs), but not dsRNA shorter than 300 bp. Not involved in RNA autophagy, a process in which RNA is directly imported into lysosomes in an ATP-dependent manner, and degraded. In Mus musculus (Mouse), this protein is SID1 transmembrane family member 1 (Sidt1).